The sequence spans 187 residues: UPF0301 protein LPC_2717 (187 aa).

Belongs to the UPF0301 (AlgH) family.

The polypeptide is UPF0301 protein LPC_2717 (Legionella pneumophila (strain Corby)).